A 541-amino-acid polypeptide reads, in one-letter code: Peptidyl-alpha-hydroxyglycine alpha-amidating lyase 1 (541 aa).

The N-terminal stretch at 1 to 33 (MKSTDSAKCLGSKSLAICCLLLHLLLCIRPAVS) is a signal peptide. Residues 34–458 (QTQSPQRYLH…VAVHHPSGKA (425 aa)) lie on the Extracellular side of the membrane. Asn92 carries N-linked (GlcNAc...) asparagine glycosylation. NHL repeat units follow at residues 164-205 (GKVQ…FPPR), 215-258 (LGDA…YSRK), and 272-314 (GISY…FLSS). 2 disulfides stabilise this stretch: Cys228-Cys248 and Cys299-Cys310. Asn315 carries N-linked (GlcNAc...) asparagine glycosylation. The NHL 4 repeat unit spans residues 374-418 (KQLVSKFGPNNLQFQNPHDVAVTADGNEIYVAELNPMRIHKFVHR). A helical membrane pass occupies residues 459 to 479 (ILVASLMLLFAGSTFALALIF). At 480–541 (ARRRKRGCLP…TKTLASAQYA (62 aa)) the chain is on the cytoplasmic side. Positions 521–541 (LDQQASDEEQETKTLASAQYA) are disordered.

It belongs to the peptidyl-alpha-hydroxyglycine alpha-amidating lyase family. The cofactor is Zn(2+). In terms of processing, N-glycosylated. As to expression, widely expressed. In mature larvae, it is ubiquitously expressed with a low expression in all cells and a stronger expression in a subset of neurons. Colocalizes with neuropeptide proctolin. In adults, weak expression is observed in most neuronal cell bodies and in scattered large cells throughout the protocerebrum and also in the subesophageal neuromeres (at protein level).

The protein localises to the cell membrane. It catalyses the reaction a [peptide]-C-terminal (2S)-2-hydroxyglycine = a [peptide]-C-terminal amide + glyoxylate. In terms of biological role, peptidyl-alpha-hydroxylglycine alpha-amidating lyase that catalyzes an essential reaction in C-terminal alpha-amidation of peptides. Mediates the dismutation of the unstable peptidyl(2-hydroxyglycine) intermediate to glyoxylate and the corresponding desglycine peptide amide. C-terminal amidation of peptides such as neuropeptides is essential for full biological activity. The protein is Peptidyl-alpha-hydroxyglycine alpha-amidating lyase 1 (Pal1) of Drosophila melanogaster (Fruit fly).